A 425-amino-acid polypeptide reads, in one-letter code: 3-deoxy-D-manno-octulosonic acid transferase (425 aa).

The helical; Signal-anchor transmembrane segment at 3-23 (ELLYTALLYLIQPLIWIRLWV) threads the bilayer. Glu-60 functions as the Proton acceptor in the catalytic mechanism. Residues 268 to 269 (PR), 309 to 311 (MGE), and 335 to 338 (NPLE) contribute to the CMP site.

The protein belongs to the glycosyltransferase group 1 family. Glycosyltransferase 30 subfamily.

Its subcellular location is the cell inner membrane. The enzyme catalyses lipid IVA (E. coli) + CMP-3-deoxy-beta-D-manno-octulosonate = alpha-Kdo-(2-&gt;6)-lipid IVA (E. coli) + CMP + H(+). The catalysed reaction is alpha-Kdo-(2-&gt;6)-lipid IVA (E. coli) + CMP-3-deoxy-beta-D-manno-octulosonate = alpha-Kdo-(2-&gt;4)-alpha-Kdo-(2-&gt;6)-lipid IVA (E. coli) + CMP + H(+). The protein operates within glycolipid biosynthesis; KDO(2)-lipid A biosynthesis; KDO(2)-lipid A from CMP-3-deoxy-D-manno-octulosonate and lipid IV(A): step 1/4. Its pathway is glycolipid biosynthesis; KDO(2)-lipid A biosynthesis; KDO(2)-lipid A from CMP-3-deoxy-D-manno-octulosonate and lipid IV(A): step 2/4. It participates in bacterial outer membrane biogenesis; LPS core biosynthesis. In terms of biological role, involved in lipopolysaccharide (LPS) biosynthesis. Catalyzes the transfer of two 3-deoxy-D-manno-octulosonate (Kdo) residues from CMP-Kdo to lipid IV(A), the tetraacyldisaccharide-1,4'-bisphosphate precursor of lipid A. In Escherichia coli O157:H7, this protein is 3-deoxy-D-manno-octulosonic acid transferase (waaA).